The following is a 201-amino-acid chain: Large ribosomal subunit protein uL4 (201 aa).

Residues 45-71 (AQKTRAEVTGSGKKPWRQKGTGRARAG) form a disordered region.

This sequence belongs to the universal ribosomal protein uL4 family. Part of the 50S ribosomal subunit.

Functionally, one of the primary rRNA binding proteins, this protein initially binds near the 5'-end of the 23S rRNA. It is important during the early stages of 50S assembly. It makes multiple contacts with different domains of the 23S rRNA in the assembled 50S subunit and ribosome. Its function is as follows. Forms part of the polypeptide exit tunnel. The sequence is that of Large ribosomal subunit protein uL4 from Shewanella pealeana (strain ATCC 700345 / ANG-SQ1).